Reading from the N-terminus, the 535-residue chain is Flavin-containing monooxygenase 2 (535 aa).

Ala-2 bears the N-acetylalanine mark. FAD is bound by residues 9–13 (GAGVS), Glu-32, 40–41 (VW), and 61–62 (NT). NADP(+) contacts are provided by residues 60–61 (TN) and 195–198 (SGSD). Lys-492 participates in a covalent cross-link: Glycyl lysine isopeptide (Lys-Gly) (interchain with G-Cter in SUMO). A helical transmembrane segment spans residues 510-530 (FSVSFLLKILGLLAVVVAFFC).

This sequence belongs to the FMO family. The cofactor is FAD. Mg(2+) serves as cofactor. In terms of tissue distribution, expressed in lung (at protein level). Expressed predominantly in lung, and at a much lesser extent in kidney. Also expressed in fetal lung, but not in liver, kidney and brain.

Its subcellular location is the microsome membrane. It localises to the endoplasmic reticulum membrane. Functionally, catalyzes the oxidative metabolism of numerous xenobiotics, including mainly therapeutic drugs and insecticides that contain a soft nucleophile, most commonly nitrogen and sulfur and participates to their bioactivation. Specifically catalyzes S-oxygenation of sulfur derived compounds such as thioureas-derived compounds, thioetherorganophosphates to their sulfenic acid. In vitro, catalyzes S-oxygenation of the second-line antitubercular drugs thiacetazone (TAZ) and ethionamide (ETA), forming a sulfinic acid and a carbodiimide via a postulated sulfenic acid intermediate. Also catalyzes S-oxygenation of the thioether-containing organophosphate insecticides, phorate and disulfoton. The chain is Flavin-containing monooxygenase 2 from Homo sapiens (Human).